The sequence spans 249 residues: Probable septum site-determining protein MinC (249 aa).

A disordered region spans residues 115–144 (PTAVSPPPPPPPPPARAEPAPPAARPAPGR). Pro residues predominate over residues 118–139 (VSPPPPPPPPPARAEPAPPAAR).

The protein belongs to the MinC family. As to quaternary structure, interacts with MinD and FtsZ.

In terms of biological role, cell division inhibitor that blocks the formation of polar Z ring septums. Rapidly oscillates between the poles of the cell to destabilize FtsZ filaments that have formed before they mature into polar Z rings. Prevents FtsZ polymerization. This Xanthomonas axonopodis pv. citri (strain 306) protein is Probable septum site-determining protein MinC.